We begin with the raw amino-acid sequence, 230 residues long: Large ribosomal subunit protein bL25 (230 aa).

This sequence belongs to the bacterial ribosomal protein bL25 family. CTC subfamily. Part of the 50S ribosomal subunit; part of the 5S rRNA/L5/L18/L25 subcomplex. Contacts the 5S rRNA. Binds to the 5S rRNA independently of L5 and L18.

In terms of biological role, this is one of the proteins that binds to the 5S RNA in the ribosome where it forms part of the central protuberance. This chain is Large ribosomal subunit protein bL25 (rplY), found in Rhodopseudomonas palustris (strain ATCC BAA-98 / CGA009).